A 1101-amino-acid chain; its full sequence is Carbamoyl phosphate synthase large chain (1101 aa).

The segment at 1–402 (MPKRTDLKSV…ALQKALRSLE (402 aa)) is carboxyphosphate synthetic domain. ATP is bound by residues Arg129, Arg169, Gly175, Gly176, Glu208, Ile210, Glu215, Gly241, Val242, His243, Gln285, and Glu299. The ATP-grasp 1 domain maps to 133–328 (KGVVERAGGE…IAKIATKLAL (196 aa)). The Mg(2+) site is built by Gln285, Glu299, and Asn301. Gln285, Glu299, and Asn301 together coordinate Mn(2+). Residues 403 to 544 (QKGSELAFPQ…YRYSSYDLET (142 aa)) form an oligomerization domain region. The interval 545–947 (EVAPHEGESV…AFAKSQSAAG (403 aa)) is carbamoyl phosphate synthetic domain. One can recognise an ATP-grasp 2 domain in the interval 675-866 (ALVLERAGLV…LAKAAARIGV (192 aa)). Positions 711, 750, 752, 757, 782, 783, 784, 785, 825, and 837 each coordinate ATP. Residues Gln825, Glu837, and Asn839 each contribute to the Mg(2+) site. The Mn(2+) site is built by Gln825, Glu837, and Asn839. Residues 948–1093 (GPLPTSGRVF…QEHDARLQQA (146 aa)) form the MGS-like domain. Residues 948 to 1101 (GPLPTSGRVF…QAVAGPEAAA (154 aa)) are allosteric domain.

Belongs to the CarB family. In terms of assembly, composed of two chains; the small (or glutamine) chain promotes the hydrolysis of glutamine to ammonia, which is used by the large (or ammonia) chain to synthesize carbamoyl phosphate. Tetramer of heterodimers (alpha,beta)4. The cofactor is Mg(2+). Requires Mn(2+) as cofactor.

The enzyme catalyses hydrogencarbonate + L-glutamine + 2 ATP + H2O = carbamoyl phosphate + L-glutamate + 2 ADP + phosphate + 2 H(+). It carries out the reaction hydrogencarbonate + NH4(+) + 2 ATP = carbamoyl phosphate + 2 ADP + phosphate + 2 H(+). Its pathway is amino-acid biosynthesis; L-arginine biosynthesis; carbamoyl phosphate from bicarbonate: step 1/1. It functions in the pathway pyrimidine metabolism; UMP biosynthesis via de novo pathway; (S)-dihydroorotate from bicarbonate: step 1/3. Functionally, large subunit of the glutamine-dependent carbamoyl phosphate synthetase (CPSase). CPSase catalyzes the formation of carbamoyl phosphate from the ammonia moiety of glutamine, carbonate, and phosphate donated by ATP, constituting the first step of 2 biosynthetic pathways, one leading to arginine and/or urea and the other to pyrimidine nucleotides. The large subunit (synthetase) binds the substrates ammonia (free or transferred from glutamine from the small subunit), hydrogencarbonate and ATP and carries out an ATP-coupled ligase reaction, activating hydrogencarbonate by forming carboxy phosphate which reacts with ammonia to form carbamoyl phosphate. The sequence is that of Carbamoyl phosphate synthase large chain from Micrococcus luteus (strain ATCC 4698 / DSM 20030 / JCM 1464 / CCM 169 / CCUG 5858 / IAM 1056 / NBRC 3333 / NCIMB 9278 / NCTC 2665 / VKM Ac-2230) (Micrococcus lysodeikticus).